A 31-amino-acid chain; its full sequence is Cytochrome b6-f complex subunit 6 (31 aa).

Residues 4–26 (ITSYFGFLLAASTITPALLIGLS) form a helical membrane-spanning segment.

The protein belongs to the PetL family. As to quaternary structure, the 4 large subunits of the cytochrome b6-f complex are cytochrome b6, subunit IV (17 kDa polypeptide, PetD), cytochrome f and the Rieske protein, while the 4 small subunits are PetG, PetL, PetM and PetN. The complex functions as a dimer.

It is found in the plastid. The protein localises to the chloroplast thylakoid membrane. In terms of biological role, component of the cytochrome b6-f complex, which mediates electron transfer between photosystem II (PSII) and photosystem I (PSI), cyclic electron flow around PSI, and state transitions. PetL is important for photoautotrophic growth as well as for electron transfer efficiency and stability of the cytochrome b6-f complex. The chain is Cytochrome b6-f complex subunit 6 from Illicium oligandrum (Star anise).